Here is an 840-residue protein sequence, read N- to C-terminus: Phosphatidylglycerol lysyltransferase (840 aa).

Topologically, residues 1 to 8 (MTEELKNR) are cytoplasmic. Residues 9-29 (LLSILKFVFAAVLFIAVVATL) traverse the membrane as a helical segment. Topologically, residues 30–52 (YHELAHINFKQTLEAFSKINRWY) are extracellular. Residues 53-73 (LVGLFICGGSAMILLSLYDLI) traverse the membrane as a helical segment. Residues 74-89 (LVKGLKLDIPLIRVFK) are Cytoplasmic-facing. A helical membrane pass occupies residues 90–110 (ISYIINALNAIVGFGGFIGAG). Topologically, residues 111-129 (FRAFIYKNYTTDRKKLVHA) are extracellular. A helical transmembrane segment spans residues 130 to 150 (ISIILISMLMGLSLLSILVVL). The Cytoplasmic segment spans residues 151–167 (HIFDASHIINKVSWVRW). Residues 168–188 (ILYVVALFLPLFIAYTMINPI) form a helical membrane-spanning segment. Over 189–193 (DRNNK) the chain is Extracellular. A helical membrane pass occupies residues 194–216 (YLGVYCTLVSSFEWLAAATVLYL). Over 217-229 (STVIVDINIAFTT) the chain is Cytoplasmic. Residues 230 to 250 (VIGIFIIAALSGLVSFIPGGF) form a helical membrane-spanning segment. The Extracellular portion of the chain corresponds to 251 to 271 (GAFDLVVLLGLKSLGVPEEKV). Residues 272–292 (LLALLLYRFAYYFVPVIIALI) form a helical membrane-spanning segment. The Cytoplasmic segment spans residues 293-335 (LSTFEFGSSARKYFEESKYFVPARDVTSFLFSYQKDIIAKIPS). Residues 336-356 (FALATLVLITSFVFFINNITI) traverse the membrane as a helical segment. Topologically, residues 357 to 366 (VYDGLYDDHH) are extracellular. Residues 367-387 (FAYYIMLSVHTSACLLLLINV) traverse the membrane as a helical segment. Over 388–394 (RGVFKQS) the chain is Cytoplasmic. The next 2 helical transmembrane spans lie at 395–415 (RRAI…TIYT) and 416–436 (YASL…ILAY). At 437-450 (RRSKVMKRPFRLKR) the chain is on the cytoplasmic side. The helical transmembrane segment at 451 to 471 (LIFTIILSMLVLYVNHFIISE) threads the bilayer. The Extracellular segment spans residues 472–490 (TLYALDIYHIEMDTSLLKY). Residues 491 to 511 (YFWLTILVVVILVGIVAWLLG) traverse the membrane as a helical segment. Topologically, residues 512 to 840 (SRYTRPHQLE…LKVMRVIRHK (329 aa)) are cytoplasmic.

It belongs to the LPG synthase family.

Its subcellular location is the cell membrane. The catalysed reaction is L-lysyl-tRNA(Lys) + a 1,2-diacyl-sn-glycero-3-phospho-(1'-sn-glycerol) = a 1,2-diacyl-sn-glycero-3-phospho-1'-(3'-O-L-lysyl)-sn-glycerol + tRNA(Lys). In terms of biological role, catalyzes the transfer of a lysyl group from L-lysyl-tRNA(Lys) to membrane-bound phosphatidylglycerol (PG), which produces lysylphosphatidylglycerol (LPG), a major component of the bacterial membrane with a positive net charge. LPG synthesis contributes to bacterial virulence as it is involved in the resistance mechanism against cationic antimicrobial peptides (CAMP) produces by the host's immune system (defensins, cathelicidins) and by the competing microorganisms (bacteriocins). In fact, the modification of anionic phosphatidylglycerol with positively charged L-lysine results in repulsion of the peptides. This is Phosphatidylglycerol lysyltransferase (mprF) from Staphylococcus haemolyticus (strain JCSC1435).